The primary structure comprises 89 residues: Small ribosomal subunit protein uS15 (89 aa).

This sequence belongs to the universal ribosomal protein uS15 family. Part of the 30S ribosomal subunit. Forms a bridge to the 50S subunit in the 70S ribosome, contacting the 23S rRNA.

Its function is as follows. One of the primary rRNA binding proteins, it binds directly to 16S rRNA where it helps nucleate assembly of the platform of the 30S subunit by binding and bridging several RNA helices of the 16S rRNA. Forms an intersubunit bridge (bridge B4) with the 23S rRNA of the 50S subunit in the ribosome. The polypeptide is Small ribosomal subunit protein uS15 (Bartonella bacilliformis (strain ATCC 35685 / KC583 / Herrer 020/F12,63)).